A 277-amino-acid polypeptide reads, in one-letter code: Ribosomal RNA small subunit methyltransferase A (277 aa).

S-adenosyl-L-methionine-binding residues include histidine 15, leucine 17, glycine 42, glutamate 64, aspartate 89, and asparagine 109.

The protein belongs to the class I-like SAM-binding methyltransferase superfamily. rRNA adenine N(6)-methyltransferase family. RsmA subfamily.

It is found in the cytoplasm. It carries out the reaction adenosine(1518)/adenosine(1519) in 16S rRNA + 4 S-adenosyl-L-methionine = N(6)-dimethyladenosine(1518)/N(6)-dimethyladenosine(1519) in 16S rRNA + 4 S-adenosyl-L-homocysteine + 4 H(+). In terms of biological role, specifically dimethylates two adjacent adenosines (A1518 and A1519) in the loop of a conserved hairpin near the 3'-end of 16S rRNA in the 30S particle. May play a critical role in biogenesis of 30S subunits. The protein is Ribosomal RNA small subunit methyltransferase A of Synechococcus sp. (strain CC9311).